The following is a 119-amino-acid chain: Large ribosomal subunit protein bL20 (119 aa).

This sequence belongs to the bacterial ribosomal protein bL20 family.

In terms of biological role, binds directly to 23S ribosomal RNA and is necessary for the in vitro assembly process of the 50S ribosomal subunit. It is not involved in the protein synthesizing functions of that subunit. This Acidithiobacillus ferrooxidans (strain ATCC 23270 / DSM 14882 / CIP 104768 / NCIMB 8455) (Ferrobacillus ferrooxidans (strain ATCC 23270)) protein is Large ribosomal subunit protein bL20.